The chain runs to 218 residues: uncharacterized protein (218 aa).

Residues 1-24 (MAAQPQAPSAGGRPRAGKAVKSVA) form a disordered region. Residues 28–88 (KLSRESIVEG…AVRIRVIDDI (61 aa)) form the HTH tetR-type domain. The H-T-H motif DNA-binding region spans 51–70 (TINALATQLGTKGPSLYNHV). The residue at position 57 (Thr-57) is a Phosphothreonine; by PknH.

Post-translationally, phosphorylated on Thr-57 by PknH.

This is an uncharacterized protein from Mycobacterium tuberculosis (strain ATCC 25618 / H37Rv).